We begin with the raw amino-acid sequence, 344 residues long: Ras association domain-containing protein 1 (344 aa).

Ser2 carries the post-translational modification N-acetylserine. Position 2 is a phosphoserine (Ser2). The segment at 2–119 (SGEPELIELR…DLGWEPAVER (118 aa)) is mediates interaction with E4F1. Residue Arg36 is modified to Omega-N-methylarginine. The Phorbol-ester/DAG-type zinc finger occupies 51 to 105 (GHRFQPAGPATHTWCDLCGDFIWGVVRKGLQCARLSADCKFTCHYRCRALVCLDC). Residues 179–189 (SVPSSKKPPSL) show a composition bias toward low complexity. The disordered stretch occupies residues 179-203 (SVPSSKKPPSLQDARRGPGRGTSVR). The Ras-associating domain occupies 198 to 292 (RGTSVRRRTS…LSFVLKENDS (95 aa)). The SARAH domain occupies 294–341 (EVNWDAFSMPELHNFLRILQREEEEHLRQILQKYSYCRQKIQEALHAC). The MOAP1-binding stretch occupies residues 315–318 (EEEE).

In terms of assembly, interacts with MAP1S. Interacts with XPA. Binds to the N-terminal of CDC20 during prometaphase. Binds to STK3/MST2 and STK4/MST1. Recruited to the TNFRSF1A and TNFRSF10A complexes in response to their respective cognate ligand, after internalization. Can self-associate. Part of a complex with MDM2, DAXX, RASSF1 and USP7. Interacts with ECM2. Interacts with MOAP1. Interacts with E4F1. Interacts with RSSF5 and probably associates with HRAS via a RSSF1 isoform A-RSSF5 heterodimer. Interacts (via C-terminus) with DAXX (via N-terminus); the interaction is independent of MDM2 and TP53. Interacts (via N-terminus) with MDM2 (via C-terminus); the interaction is independent of TP53. Interacts with RAB39A. Interacts with RAB39B; the interaction is weak. As to quaternary structure, interacts (via N-terminus) with DAXX. Interacts with RAB39B; the interaction is strong. Does not interact with RAB39A. In terms of assembly, interacts (via N-terminus) with DAXX. In terms of tissue distribution, isoform A and isoform C are ubiquitously expressed in all tissues tested, however isoform A is absent in many corresponding cancer cell lines. Isoform B is mainly expressed in hematopoietic cells.

The protein resides in the cytoplasm. The protein localises to the cytoskeleton. It is found in the microtubule organizing center. Its subcellular location is the centrosome. It localises to the spindle. The protein resides in the spindle pole. The protein localises to the nucleus. Its function is as follows. Potential tumor suppressor. Required for death receptor-dependent apoptosis. Mediates activation of STK3/MST2 and STK4/MST1 during Fas-induced apoptosis by preventing their dephosphorylation. When associated with MOAP1, promotes BAX conformational change and translocation to mitochondrial membranes in response to TNF and TNFSF10 stimulation. Isoform A interacts with CDC20, an activator of the anaphase-promoting complex, APC, resulting in the inhibition of APC activity and mitotic progression. Inhibits proliferation by negatively regulating cell cycle progression at the level of G1/S-phase transition by regulating accumulation of cyclin D1 protein. Isoform C has been shown not to perform these roles, no function has been identified for this isoform. Isoform A disrupts interactions among MDM2, DAXX and USP7, thus contributing to the efficient activation of TP53 by promoting MDM2 self-ubiquitination in cell-cycle checkpoint control in response to DNA damage. This chain is Ras association domain-containing protein 1, found in Homo sapiens (Human).